The sequence spans 387 residues: Succinate--CoA ligase [ADP-forming] subunit beta (387 aa).

Residues 9–245 enclose the ATP-grasp domain; it reads KDLLESYGLK…KSQENAKELK (237 aa). ATP is bound by residues Lys-46, 53-55, Glu-100, Tyr-103, and Glu-108; that span reads GRG. 2 residues coordinate Mg(2+): Asn-200 and Asp-214. Residues Asn-265 and 322 to 324 each bind substrate; that span reads GIV.

The protein belongs to the succinate/malate CoA ligase beta subunit family. In terms of assembly, heterotetramer of two alpha and two beta subunits. Mg(2+) serves as cofactor.

It carries out the reaction succinate + ATP + CoA = succinyl-CoA + ADP + phosphate. The catalysed reaction is GTP + succinate + CoA = succinyl-CoA + GDP + phosphate. It functions in the pathway carbohydrate metabolism; tricarboxylic acid cycle; succinate from succinyl-CoA (ligase route): step 1/1. Functionally, succinyl-CoA synthetase functions in the citric acid cycle (TCA), coupling the hydrolysis of succinyl-CoA to the synthesis of either ATP or GTP and thus represents the only step of substrate-level phosphorylation in the TCA. The beta subunit provides nucleotide specificity of the enzyme and binds the substrate succinate, while the binding sites for coenzyme A and phosphate are found in the alpha subunit. The chain is Succinate--CoA ligase [ADP-forming] subunit beta from Francisella tularensis subsp. novicida (strain U112).